The chain runs to 179 residues: Large ribosomal subunit protein uL5c (179 aa).

The protein belongs to the universal ribosomal protein uL5 family. Part of the 50S ribosomal subunit; contacts the 5S rRNA.

It is found in the plastid. The protein localises to the chloroplast. Binds 5S rRNA, forms part of the central protuberance of the 50S subunit. This Gracilaria tenuistipitata var. liui (Red alga) protein is Large ribosomal subunit protein uL5c (rpl5).